A 463-amino-acid chain; its full sequence is Chromosomal replication initiator protein DnaA (463 aa).

The interval 1–83 (MSTNQIILTD…LQLFQHYNNT (83 aa)) is domain I, interacts with DnaA modulators. Residues 83 to 124 (TIKSIEIITKELPGTTQTVIELPTKTFADIGSSELNSENIFS) form a domain II region. Residues 125–343 (TLDVRFTFDN…GALNKVIAHS (219 aa)) form a domain III, AAA+ region region. Residues Gly-171, Gly-173, Lys-174, and Thr-175 each contribute to the ATP site. The interval 344–463 (NFTLKEITLE…INLLMKILQN (120 aa)) is domain IV, binds dsDNA.

Belongs to the DnaA family. Oligomerizes as a right-handed, spiral filament on DNA at oriC.

Its subcellular location is the cytoplasm. Its function is as follows. Plays an essential role in the initiation and regulation of chromosomal replication. ATP-DnaA binds to the origin of replication (oriC) to initiate formation of the DNA replication initiation complex once per cell cycle. Binds the DnaA box (a 9 base pair repeat at the origin) and separates the double-stranded (ds)DNA. Forms a right-handed helical filament on oriC DNA; dsDNA binds to the exterior of the filament while single-stranded (ss)DNA is stabiized in the filament's interior. The ATP-DnaA-oriC complex binds and stabilizes one strand of the AT-rich DNA unwinding element (DUE), permitting loading of DNA polymerase. After initiation quickly degrades to an ADP-DnaA complex that is not apt for DNA replication. Binds acidic phospholipids. In Rickettsia felis (strain ATCC VR-1525 / URRWXCal2) (Rickettsia azadi), this protein is Chromosomal replication initiator protein DnaA.